The chain runs to 830 residues: Lon protease (830 aa).

Positions 1–28 are disordered; that stretch reads MTFDTNDDSIAKNSLAPYNQETEQQQEE. The region spanning 50–245 is the Lon N-terminal domain; that stretch reads IPILPLRDVV…LVITHLTHEA (196 aa). An ATP-binding site is contributed by 397–404; sequence GPPGVGKT. The Lon proteolytic domain occupies 633-814; it reads TLPPGVALGL…DEVLPLAFSE (182 aa). Catalysis depends on residues S720 and K763.

It belongs to the peptidase S16 family. Homohexamer. Organized in a ring with a central cavity.

The protein resides in the cytoplasm. It catalyses the reaction Hydrolysis of proteins in presence of ATP.. Its function is as follows. ATP-dependent serine protease that mediates the selective degradation of mutant and abnormal proteins as well as certain short-lived regulatory proteins. Required for cellular homeostasis and for survival from DNA damage and developmental changes induced by stress. Degrades polypeptides processively to yield small peptide fragments that are 5 to 10 amino acids long. Binds to DNA in a double-stranded, site-specific manner. The chain is Lon protease from Lawsonia intracellularis (strain PHE/MN1-00).